Here is a 782-residue protein sequence, read N- to C-terminus: Lysosome membrane protein 2-C (782 aa).

At 1–7 the chain is on the cytoplasmic side; it reads MVANNKG. A helical membrane pass occupies residues 8-28; that stretch reads LLIAGLLLSVIGAALFVISLA. Residues 29–739 lie on the Lumenal side of the membrane; sequence LLPSVLNVAT…QQFKQIQTVK (711 aa). Asn-77, Asn-105, Asn-191, Asn-219, Asn-234, Asn-243, Asn-281, Asn-368, Asn-387, Asn-401, Asn-427, Asn-432, Asn-451, Asn-465, Asn-501, Asn-536, Asn-540, Asn-595, Asn-605, Asn-613, Asn-646, and Asn-692 each carry an N-linked (GlcNAc...) asparagine glycan. A helical membrane pass occupies residues 740 to 760; sequence IAPVVVVSIFGGILLIAGLVM. At 761-782 the chain is on the cytoplasmic side; the sequence is AINGFRKTFYNNNQYNGYNIIN. The Tyrosine-type lysosomal sorting signal signature appears at 777-781; it reads GYNII.

Belongs to the CD36 family. Heavily glycosylated.

Its subcellular location is the lysosome membrane. Its function is as follows. May act as a lysosomal receptor. May be involved role in macropinocytosis and fluid phase exocytosis. The protein is Lysosome membrane protein 2-C (lmpC) of Dictyostelium discoideum (Social amoeba).